Consider the following 369-residue polypeptide: MANPSLLILAGDGIGPEVMAEVKRIIGWFGEKRGVSFDVSEDLVGGAAYDAHGTPLADETMARAQEVDAVLLGAVGGPKYDVLDFSVKPERGLLRLRKEMDLYANLRPAQCFDALADFSSLKRDIVAGLDIMIVRELTSGVYFGEPRGIFPDNEGGRFGVNTQRYTTEEIRRVARSAFELARRRNNRVCSMEKANVMESGILWREEVQWVHDNEYPDVELSHMYADNGAMQLVRWPRQFDVIVTDNLFGDILSDCAAMLTGSLGMLPSASLGAPMANGRPKALYEPVHGSAPDIAGQGKANPIACILSFAMALRYSFDMGEEATRLEKAVETVLADGVRTADLMGPEGGTPVSTSGMGDAVLAALDASL.

Residue 77 to 90 (GPKYDVLDFSVKPE) coordinates NAD(+). Arg97, Arg107, Arg135, and Asp226 together coordinate substrate. Mg(2+) is bound by residues Asp226, Asp250, and Asp254. 289–301 (GSAPDIAGQGKAN) is an NAD(+) binding site.

It belongs to the isocitrate and isopropylmalate dehydrogenases family. LeuB type 1 subfamily. In terms of assembly, homodimer. The cofactor is Mg(2+). Requires Mn(2+) as cofactor.

It is found in the cytoplasm. The enzyme catalyses (2R,3S)-3-isopropylmalate + NAD(+) = 4-methyl-2-oxopentanoate + CO2 + NADH. The protein operates within amino-acid biosynthesis; L-leucine biosynthesis; L-leucine from 3-methyl-2-oxobutanoate: step 3/4. In terms of biological role, catalyzes the oxidation of 3-carboxy-2-hydroxy-4-methylpentanoate (3-isopropylmalate) to 3-carboxy-4-methyl-2-oxopentanoate. The product decarboxylates to 4-methyl-2 oxopentanoate. The polypeptide is 3-isopropylmalate dehydrogenase (Cereibacter sphaeroides (strain ATCC 17023 / DSM 158 / JCM 6121 / CCUG 31486 / LMG 2827 / NBRC 12203 / NCIMB 8253 / ATH 2.4.1.) (Rhodobacter sphaeroides)).